We begin with the raw amino-acid sequence, 511 residues long: Trigger factor (511 aa).

The PPIase FKBP-type domain occupies 168–253 (GDLLTIDFVG…VKEVKAPAEV (86 aa)). Residues 446–511 (DEHEHHHHDH…KAPAKKKKED (66 aa)) are disordered. Positions 455–478 (HDHDHDHDHDHDHGHDHDHGDEKP) are enriched in basic and acidic residues. The segment covering 479 to 488 (KKKPAAKKAA) has biased composition (basic residues). The segment covering 489–498 (AKSDDGEAKP) has biased composition (basic and acidic residues). Positions 499–511 (AAKKAPAKKKKED) are enriched in basic residues.

This sequence belongs to the FKBP-type PPIase family. Tig subfamily.

The protein resides in the cytoplasm. It carries out the reaction [protein]-peptidylproline (omega=180) = [protein]-peptidylproline (omega=0). Its function is as follows. Involved in protein export. Acts as a chaperone by maintaining the newly synthesized protein in an open conformation. Functions as a peptidyl-prolyl cis-trans isomerase. The chain is Trigger factor from Parvibaculum lavamentivorans (strain DS-1 / DSM 13023 / NCIMB 13966).